The primary structure comprises 426 residues: Enolase (426 aa).

Residue Q163 coordinates (2R)-2-phosphoglycerate. The Proton donor role is filled by E205. Mg(2+) contacts are provided by D242, E283, and D310. (2R)-2-phosphoglycerate is bound by residues K335, R364, S365, and K386. K335 serves as the catalytic Proton acceptor.

Belongs to the enolase family. Requires Mg(2+) as cofactor.

It localises to the cytoplasm. It is found in the secreted. The protein localises to the cell surface. It catalyses the reaction (2R)-2-phosphoglycerate = phosphoenolpyruvate + H2O. It participates in carbohydrate degradation; glycolysis; pyruvate from D-glyceraldehyde 3-phosphate: step 4/5. Functionally, catalyzes the reversible conversion of 2-phosphoglycerate (2-PG) into phosphoenolpyruvate (PEP). It is essential for the degradation of carbohydrates via glycolysis. This Clavibacter sepedonicus (Clavibacter michiganensis subsp. sepedonicus) protein is Enolase.